A 122-amino-acid polypeptide reads, in one-letter code: Large ribosomal subunit protein uL14 (122 aa).

Belongs to the universal ribosomal protein uL14 family. Part of the 50S ribosomal subunit. Forms a cluster with proteins L3 and L19. In the 70S ribosome, L14 and L19 interact and together make contacts with the 16S rRNA in bridges B5 and B8.

In terms of biological role, binds to 23S rRNA. Forms part of two intersubunit bridges in the 70S ribosome. In Macrococcus caseolyticus (strain JCSC5402) (Macrococcoides caseolyticum), this protein is Large ribosomal subunit protein uL14.